The chain runs to 291 residues: Glycine--tRNA ligase alpha subunit (291 aa).

Belongs to the class-II aminoacyl-tRNA synthetase family. Tetramer of two alpha and two beta subunits.

The protein localises to the cytoplasm. The catalysed reaction is tRNA(Gly) + glycine + ATP = glycyl-tRNA(Gly) + AMP + diphosphate. The protein is Glycine--tRNA ligase alpha subunit of Geobacter metallireducens (strain ATCC 53774 / DSM 7210 / GS-15).